The sequence spans 765 residues: MQIRYFLALSLLPQLVLADESPTASASQCVIEPPVPRIVSQPGLSAADQEKIRIVSDRSNAEMGKQAIFTGDVVFSQGDRHIAADEAILDQATEQFDANGNLVFQDNIFTVTADSLQAQMRSNRATLKGAQYWLHGQQVHGDAEKLQITMNNNLILTNTNFTTCPPDNVSWLLEAEKIKINSEEEWGEIWNAKLRIADIPVFYIPYMTVPVSDKRKTGFLYPSFSTSTTNGFEVSAPYYWNIAPEYDLTFTPNYMSSRGLFTKTEFRYLAGEAQSGRLNLEYLGNDQMLSGSPNRYLYNWQHQGAIDKNWRVLANFTEVSDNNYFNDLKSDVNRATDNQLSRIGEVSYFERNWDISTRVQDIKVLGEDEKPYQVMPQVNFNYRAADFWNNLDFGFNSELTNFAHDDSDMNTATRLHMAPSLTLPIHGPSGSLTSQVKLMQTNYWQEQNNSAFDGLDDTVSRTIPQVRINGQINFERFTELFDQNYRQTLEPQFQYLYVGYEDQRGIGIYDTAQLQDDYFGLFRDRRFSGLDRIADANQVTLGVTTRFFDDHNQEATKFSLGQILYLQDSKLGYEDNLFEQNQSTSVLAAELDTRLSHDWYLGAAIQYDTNSSNNKKTEVTLDFRPEANKLLQLSYRYVPDLLNSNTNDLVNISQAGVRGAWPINDSLYFVGNWYYDLNESRSIETYTGFQYESCCYAIRLSYHYRIKTNYDDNIGSAVIDEREQFESGVYLNLVIKGLGGSGPLGVSDMLNDGLFNYRKPLYLRN.

Positions 1–18 are cleaved as a signal peptide; sequence MQIRYFLALSLLPQLVLA.

This sequence belongs to the LptD family. Component of the lipopolysaccharide transport and assembly complex. Interacts with LptE and LptA.

The protein localises to the cell outer membrane. Together with LptE, is involved in the assembly of lipopolysaccharide (LPS) at the surface of the outer membrane. In Shewanella sp. (strain MR-4), this protein is LPS-assembly protein LptD.